Here is a 418-residue protein sequence, read N- to C-terminus: Nickel and cobalt resistance protein CnrC (418 aa).

The signal sequence occupies residues 1–29 (MKQVISSFLCRPRFVGSAIWLLPVALSHA).

This sequence belongs to the outer membrane factor (OMF) (TC 1.B.17) family.

In terms of biological role, the products of the genes cnrA, cnrB, and cnrC are likely to form a membrane-bound protein complex catalyzing an energy-dependent efflux of Ni(2+) and Co(2+). The mechanism of action of the CnrCBA complex may be that of a proton/cation antiporter. This chain is Nickel and cobalt resistance protein CnrC (cnrC), found in Cupriavidus metallidurans (strain ATCC 43123 / DSM 2839 / NBRC 102507 / CH34) (Ralstonia metallidurans).